A 369-amino-acid chain; its full sequence is Flagellar P-ring protein 1 (369 aa).

The N-terminal stretch at 1–23 (MRKQSLVTLLMVLLSLVWLPASA) is a signal peptide.

The protein belongs to the FlgI family. As to quaternary structure, the basal body constitutes a major portion of the flagellar organelle and consists of four rings (L,P,S, and M) mounted on a central rod.

It is found in the periplasm. It localises to the bacterial flagellum basal body. Assembles around the rod to form the L-ring and probably protects the motor/basal body from shearing forces during rotation. The protein is Flagellar P-ring protein 1 of Yersinia pseudotuberculosis serotype I (strain IP32953).